Consider the following 76-residue polypeptide: UPF0235 protein MRA_1997 (76 aa).

Belongs to the UPF0235 family.

This chain is UPF0235 protein MRA_1997, found in Mycobacterium tuberculosis (strain ATCC 25177 / H37Ra).